Reading from the N-terminus, the 275-residue chain is tRNA uridine(34) hydroxylase (275 aa).

Residues 121–214 (SQPDVLVIDT…YLEKTYNKNG (94 aa)) enclose the Rhodanese domain. The active-site Cysteine persulfide intermediate is the cysteine 174.

This sequence belongs to the TrhO family.

The enzyme catalyses uridine(34) in tRNA + AH2 + O2 = 5-hydroxyuridine(34) in tRNA + A + H2O. Functionally, catalyzes oxygen-dependent 5-hydroxyuridine (ho5U) modification at position 34 in tRNAs. The chain is tRNA uridine(34) hydroxylase from Wolbachia pipientis wMel.